The primary structure comprises 161 residues: Nascent polypeptide-associated complex subunit beta (161 aa).

2 disordered regions span residues 14–41 (LSAN…KDDS) and 125–161 (QNAQ…ADVE). Residues 37 to 102 (NKDDSKLQAQ…PQEKSLQDLF (66 aa)) form the NAC-A/B domain. The span at 125–134 (QNAQAAAPAT) shows a compositional bias: low complexity. The span at 135–146 (EGHEAGEKKDND) shows a compositional bias: basic and acidic residues.

It belongs to the NAC-beta family. In terms of assembly, part of the nascent polypeptide-associated complex (NAC), consisting of EGD2 and EGD1. NAC associates with ribosomes via EGD1.

The protein resides in the cytoplasm. Its subcellular location is the nucleus. Component of the nascent polypeptide-associated complex (NAC), a dynamic component of the ribosomal exit tunnel, protecting the emerging polypeptides from interaction with other cytoplasmic proteins to ensure appropriate nascent protein targeting. The NAC complex also promotes mitochondrial protein import by enhancing productive ribosome interactions with the outer mitochondrial membrane and blocks the inappropriate interaction of ribosomes translating non-secretory nascent polypeptides with translocation sites in the membrane of the endoplasmic reticulum. EGD1 may act as a transcription factor that exert a negative effect on the expression of several genes that are transcribed by RNA polymerase II. This is Nascent polypeptide-associated complex subunit beta (EGD1) from Eremothecium gossypii (strain ATCC 10895 / CBS 109.51 / FGSC 9923 / NRRL Y-1056) (Yeast).